Here is a 123-residue protein sequence, read N- to C-terminus: UPF0102 protein Maqu_2464 (123 aa).

Belongs to the UPF0102 family.

This chain is UPF0102 protein Maqu_2464, found in Marinobacter nauticus (strain ATCC 700491 / DSM 11845 / VT8) (Marinobacter aquaeolei).